Reading from the N-terminus, the 983-residue chain is Inner tegument protein (983 aa).

The interaction with large tegument protein stretch occupies residues 474-983 (LNVNTHFAVQ…TSVSLPPASP (510 aa)). The segment at 901–932 (APWESAPQPPRLRMTPDTDHEESTAGATSVPE) is disordered. Residues 914–923 (MTPDTDHEES) show a composition bias toward basic and acidic residues.

This sequence belongs to the herpesviridae inner tegument protein family. As to quaternary structure, interacts (via C-terminus) with the large tegument protein/LTP (via N-terminus).

The protein resides in the virion tegument. The protein localises to the host cytoplasm. Its subcellular location is the host nucleus. It is found in the host Golgi apparatus. It localises to the host trans-Golgi network. Functionally, plays an essential role in cytoplasmic secondary envelopment during viral egress. Interacts with the capsid via the large tegument protein/LTP and participates in its transport to the host trans-Golgi network (TGN) where secondary envelopment occurs. Modulates tegumentation and capsid accumulation at the viral assembly complex. This Homo sapiens (Human) protein is Inner tegument protein (UL47).